The chain runs to 491 residues: Cadherin-3 (491 aa).

Cadherin domains are found at residues 1 to 102 (ENTV…PPVF), 103 to 208 (VPPS…DHGP), and 209 to 314 (VPEP…DPWT). At 1–316 (ENTVSHEVQR…VTCRDPWTWG (316 aa)) the chain is on the extracellular side. Residue asparagine 228 is glycosylated (N-linked (GlcNAc...) asparagine). The chain crosses the membrane as a helical span at residues 317–339 (FLLPILGAALALLLLLLVLLFLV). Residues 340–491 (RKKRKIKEPL…ADMYGGGQDD (152 aa)) are Cytoplasmic-facing.

Interacts with CDCP1 and CTNNB1.

The protein localises to the cell membrane. Cadherins are calcium-dependent cell adhesion proteins. They preferentially interact with themselves in a homophilic manner in connecting cells; cadherins may thus contribute to the sorting of heterogeneous cell types. This is Cadherin-3 (CDH3) from Bos taurus (Bovine).